The following is a 414-amino-acid chain: Isocitrate dehydrogenase [NADP] cytoplasmic (414 aa).

Ser-2 carries the post-translational modification N-acetylserine. Phosphotyrosine is present on Tyr-42. Residue 75–77 participates in NADP(+) binding; sequence TIT. Thr-77 is a substrate binding site. At Lys-81 the chain carries N6-acetyllysine. Residue Arg-82 participates in NADP(+) binding. Substrate contacts are provided by residues 94–100 and Arg-109; that span reads SPNGTIR. Lys-126 is modified (N6-succinyllysine). The substrate site is built by Arg-132 and Lys-212. 3 positions are modified to N6-acetyllysine: Lys-224, Lys-233, and Lys-243. Position 252 (Asp-252) interacts with Mn(2+). Lys-260 contributes to the NADP(+) binding site. 2 residues coordinate Mn(2+): Asp-275 and Asp-279. Residue 310-315 coordinates NADP(+); it reads GTVTRH. N6-acetyllysine is present on Lys-321. Residue Asn-328 coordinates NADP(+). Residue Ser-389 is modified to Phosphoserine. N6-succinyllysine is present on Lys-400.

Belongs to the isocitrate and isopropylmalate dehydrogenases family. Homodimer. The cofactor is Mg(2+). Requires Mn(2+) as cofactor. Acetylation at Lys-374 dramatically reduces catalytic activity. In terms of tissue distribution, highly expressed in the liver followed by kidney, lower expression in spleen, brain and lung.

The protein localises to the cytoplasm. It is found in the cytosol. The catalysed reaction is D-threo-isocitrate + NADP(+) = 2-oxoglutarate + CO2 + NADPH. Irreversibly inhibited by Cd(2+) concentrations above 50 uM. In terms of biological role, catalyzes the NADP(+)-dependent oxidative decarboxylation of isocitrate (D-threo-isocitrate) to 2-ketoglutarate (2-oxoglutarate), which is required by other enzymes such as the phytanoyl-CoA dioxygenase. Plays a critical role in the generation of NADPH, an important cofactor in many biosynthesis pathways. May act as a corneal epithelial crystallin and may be involved in maintaining corneal epithelial transparency. The chain is Isocitrate dehydrogenase [NADP] cytoplasmic (Idh1) from Mus musculus (Mouse).